A 528-amino-acid polypeptide reads, in one-letter code: Ladinin-1 (528 aa).

A disordered region spans residues 1 to 404; the sequence is MSVSRKDWSA…NSETPLTRSA (404 aa). 5 positions are modified to phosphoserine: Ser-38, Ser-56, Ser-62, Ser-72, and Ser-76. Residues 88–97 show a composition bias toward basic residues; sequence RTRKERRQRR. Ser-119 is subject to Phosphoserine. Residues 134-173 show a composition bias toward basic and acidic residues; the sequence is KKVEALPRRRLSREQRGPWAQDEERLKNRELAEGEKRLPE. SEK repeat units lie at residues 184 to 186, 190 to 192, 202 to 204, and 208 to 210; these read SEK. Residues 184-281 form a 6 X SEK repeats region; it reads SEKTPVSEKT…MQERKLVSEK (98 aa). Composition is skewed to basic and acidic residues over residues 218 to 231 and 267 to 279; these read SLTE…KLVP and IVSE…KLVS. SEK repeat units lie at residues 269–271 and 279–281; these read SEK. Positions 304 to 316 are enriched in polar residues; the sequence is EQPQTTGGSQATT. A phosphoserine mark is found at Ser-328, Ser-358, Ser-367, Ser-405, and Ser-496. The span at 365 to 377 shows a compositional bias: low complexity; the sequence is TPSPTLLTYSSSL. Residues 492–528 are disordered; sequence KTQDSGDHGSQEVRKEASVTKRAQWGSKPSTSLDAEV. Residues 495 to 510 are compositionally biased toward basic and acidic residues; that stretch reads DSGDHGSQEVRKEASV. Polar residues predominate over residues 518–528; it reads SKPSTSLDAEV.

Expressed in kidney, lung and keratinocytes followed by liver, spleen and brain. Not expressed in testis, skeletal and heart muscle and in fibroblasts.

Its subcellular location is the secreted. The protein resides in the extracellular space. It localises to the extracellular matrix. It is found in the basement membrane. In terms of biological role, anchoring filament protein which is a component of the basement membrane zone. The chain is Ladinin-1 (Lad1) from Mus musculus (Mouse).